Here is an 810-residue protein sequence, read N- to C-terminus: DNA gyrase subunit A (810 aa).

Residues 36–502 (LPDVRDGLKP…EVLKTSMSDL (467 aa)) form the Topo IIA-type catalytic domain. The active-site O-(5'-phospho-DNA)-tyrosine intermediate is the Tyr124. The tract at residues 499 to 810 (MSDLMQKENI…SLVSVSKFIK (312 aa)) is C-terminal domain. The GyrA-box signature appears at 529–535 (QGTGGKG).

It belongs to the type II topoisomerase GyrA/ParC subunit family. Heterotetramer, composed of two GyrA and two GyrB chains. In the heterotetramer, GyrA contains the active site tyrosine that forms a transient covalent intermediate with DNA, while GyrB binds cofactors and catalyzes ATP hydrolysis.

Its subcellular location is the cytoplasm. The catalysed reaction is ATP-dependent breakage, passage and rejoining of double-stranded DNA.. Functionally, a type II topoisomerase that negatively supercoils closed circular double-stranded (ds) DNA in an ATP-dependent manner to modulate DNA topology and maintain chromosomes in an underwound state. Negative supercoiling favors strand separation, and DNA replication, transcription, recombination and repair, all of which involve strand separation. Also able to catalyze the interconversion of other topological isomers of dsDNA rings, including catenanes and knotted rings. Type II topoisomerases break and join 2 DNA strands simultaneously in an ATP-dependent manner. The sequence is that of DNA gyrase subunit A from Borreliella burgdorferi (strain ATCC 35210 / DSM 4680 / CIP 102532 / B31) (Borrelia burgdorferi).